Here is a 419-residue protein sequence, read N- to C-terminus: Serine hydroxymethyltransferase (419 aa).

(6S)-5,6,7,8-tetrahydrofolate-binding positions include leucine 119 and 123 to 125 (GHL). An N6-(pyridoxal phosphate)lysine modification is found at lysine 228.

It belongs to the SHMT family. As to quaternary structure, homodimer. Pyridoxal 5'-phosphate is required as a cofactor.

It is found in the cytoplasm. The enzyme catalyses (6R)-5,10-methylene-5,6,7,8-tetrahydrofolate + glycine + H2O = (6S)-5,6,7,8-tetrahydrofolate + L-serine. Its pathway is one-carbon metabolism; tetrahydrofolate interconversion. The protein operates within amino-acid biosynthesis; glycine biosynthesis; glycine from L-serine: step 1/1. In terms of biological role, catalyzes the reversible interconversion of serine and glycine with tetrahydrofolate (THF) serving as the one-carbon carrier. This reaction serves as the major source of one-carbon groups required for the biosynthesis of purines, thymidylate, methionine, and other important biomolecules. Also exhibits THF-independent aldolase activity toward beta-hydroxyamino acids, producing glycine and aldehydes, via a retro-aldol mechanism. This is Serine hydroxymethyltransferase from Desulfosudis oleivorans (strain DSM 6200 / JCM 39069 / Hxd3) (Desulfococcus oleovorans).